Here is an 88-residue protein sequence, read N- to C-terminus: Cell division topological specificity factor (88 aa).

Belongs to the MinE family.

In terms of biological role, prevents the cell division inhibition by proteins MinC and MinD at internal division sites while permitting inhibition at polar sites. This ensures cell division at the proper site by restricting the formation of a division septum at the midpoint of the long axis of the cell. This Salmonella agona (strain SL483) protein is Cell division topological specificity factor.